Reading from the N-terminus, the 133-residue chain is ATP synthase epsilon chain (133 aa).

The protein belongs to the ATPase epsilon chain family. As to quaternary structure, F-type ATPases have 2 components, CF(1) - the catalytic core - and CF(0) - the membrane proton channel. CF(1) has five subunits: alpha(3), beta(3), gamma(1), delta(1), epsilon(1). CF(0) has three main subunits: a, b and c.

It localises to the cell membrane. In terms of biological role, produces ATP from ADP in the presence of a proton gradient across the membrane. The chain is ATP synthase epsilon chain (atpC) from Mycoplasma pneumoniae (strain ATCC 29342 / M129 / Subtype 1) (Mycoplasmoides pneumoniae).